The following is a 445-amino-acid chain: Argininosuccinate synthase (445 aa).

ATP is bound by residues 17–25 and A43; that span reads AFSGGLDTS. Y99 serves as a coordination point for L-citrulline. Residues G129 and T131 each coordinate ATP. Residues T131, N135, and D136 each coordinate L-aspartate. Residue N135 participates in L-citrulline binding. Residue D136 participates in ATP binding. L-citrulline contacts are provided by R139 and S192. Position 194 (D194) interacts with ATP. The L-citrulline site is built by T201, E203, and E280.

This sequence belongs to the argininosuccinate synthase family. Type 2 subfamily. Homotetramer.

Its subcellular location is the cytoplasm. It carries out the reaction L-citrulline + L-aspartate + ATP = 2-(N(omega)-L-arginino)succinate + AMP + diphosphate + H(+). The protein operates within amino-acid biosynthesis; L-arginine biosynthesis; L-arginine from L-ornithine and carbamoyl phosphate: step 2/3. This is Argininosuccinate synthase from Ralstonia pickettii (strain 12J).